Here is a 328-residue protein sequence, read N- to C-terminus: 17-beta-hydroxysteroid dehydrogenase type 1 (328 aa).

Residues 10–38 (GCSSGIGLHLAVRLASDPSQSFKVYATLR) and D66 contribute to the NADP(+) site. Position 135 is a phosphoserine; by PKA (S135). S143 contacts substrate. The Proton acceptor role is filled by Y156. K160 provides a ligand contact to NADP(+). The tract at residues 291 to 328 (KAEAGAEAGGGAGPGAEDEAGRGAVGDPELGDPPAAPQ) is disordered.

Belongs to the short-chain dehydrogenases/reductases (SDR) family. Homodimer. Exists predominantly as a homodimer but also exits as monomer.

Its subcellular location is the cytoplasm. It catalyses the reaction 17beta-estradiol + NAD(+) = estrone + NADH + H(+). It carries out the reaction 17beta-estradiol + NADP(+) = estrone + NADPH + H(+). The enzyme catalyses testosterone + NADP(+) = androst-4-ene-3,17-dione + NADPH + H(+). Its pathway is steroid biosynthesis; estrogen biosynthesis. Functionally, favors the reduction of estrogens and androgens. Converts estrone (E1) to a more potent estrogen, 17beta-estradiol (E2). Also has 20-alpha-HSD activity. Uses preferentially NADH. This Homo sapiens (Human) protein is 17-beta-hydroxysteroid dehydrogenase type 1.